The sequence spans 156 residues: Small ribosomal subunit protein uS7 (156 aa).

Belongs to the universal ribosomal protein uS7 family. As to quaternary structure, part of the 30S ribosomal subunit. Contacts proteins S9 and S11.

Its function is as follows. One of the primary rRNA binding proteins, it binds directly to 16S rRNA where it nucleates assembly of the head domain of the 30S subunit. Is located at the subunit interface close to the decoding center, probably blocks exit of the E-site tRNA. The sequence is that of Small ribosomal subunit protein uS7 from Laribacter hongkongensis (strain HLHK9).